The following is a 441-amino-acid chain: Xylose isomerase 1 (441 aa).

Catalysis depends on residues His105 and Asp108. Mg(2+) contacts are provided by Glu236, Glu272, His275, Asp300, Asp311, Asp313, and Asp343.

It belongs to the xylose isomerase family. In terms of assembly, homotetramer. Requires Mg(2+) as cofactor.

It localises to the cytoplasm. The catalysed reaction is alpha-D-xylose = alpha-D-xylulofuranose. The protein is Xylose isomerase 1 (xylA1) of Xanthomonas axonopodis pv. citri (strain 306).